A 365-amino-acid chain; its full sequence is Peptide chain release factor 2 (365 aa).

Glutamine 252 is subject to N5-methylglutamine.

The protein belongs to the prokaryotic/mitochondrial release factor family. Methylated by PrmC. Methylation increases the termination efficiency of RF2.

It is found in the cytoplasm. Its function is as follows. Peptide chain release factor 2 directs the termination of translation in response to the peptide chain termination codons UGA and UAA. This chain is Peptide chain release factor 2, found in Pectobacterium atrosepticum (strain SCRI 1043 / ATCC BAA-672) (Erwinia carotovora subsp. atroseptica).